The chain runs to 443 residues: Xaa-Pro dipeptidase (443 aa).

D246, D257, H339, E384, and E423 together coordinate Mn(2+).

This sequence belongs to the peptidase M24B family. Bacterial-type prolidase subfamily. It depends on Mn(2+) as a cofactor.

The catalysed reaction is Xaa-L-Pro dipeptide + H2O = an L-alpha-amino acid + L-proline. Functionally, splits dipeptides with a prolyl residue in the C-terminal position. This Shigella flexneri serotype 5b (strain 8401) protein is Xaa-Pro dipeptidase.